The following is a 156-amino-acid chain: MTRRGLTLLELLLVLGILGVLLGLALPLLSPNRLALDQAARSLATQVTRARLEAIRRNAFVGLQVFTEGAGGYLLFVDQNANRRYDPGEEFGATHFGQGNWARVRLDPEKSALGNMPLLFDPRGIPAKPITATLVLTSGGATRKVVISQQGRARLE.

Residues M1–G5 constitute a propeptide, leader sequence. L6 is subject to N-methylleucine. The helical transmembrane segment at L6 to L29 threads the bilayer.

The protein localises to the cell inner membrane. The protein resides in the cell outer membrane. It localises to the periplasm. Its function is as follows. Plays an essential role in natural DNA transformation but is not required for pilus biogenesis. The polypeptide is Pilin-like protein PilA1 (pilA1) (Thermus thermophilus (strain ATCC BAA-163 / DSM 7039 / HB27)).